Consider the following 700-residue polypeptide: ATP-dependent zinc metalloprotease FtsH (700 aa).

Residues 1 to 20 are Cytoplasmic-facing; the sequence is MSSDNGSGRQGGDRGGSTGY. A helical membrane pass occupies residues 21–41; sequence NLLMYLGFGAIIATLVALYVL. Residues 42–171 are Periplasmic-facing; it reads QMFQTSLDYT…FRHADPPGPW (130 aa). The helical transmembrane segment at 172 to 192 threads the bilayer; the sequence is EQHSQLIIGMLLAAMLIYIVV. At 193-700 the chain is on the cytoplasmic side; that stretch reads RRLSAAGSPM…ITAPATERSG (508 aa). 262–269 contributes to the ATP binding site; it reads GPPGTGKT. H484 serves as a coordination point for Zn(2+). E485 is an active-site residue. Zn(2+)-binding residues include H488 and D561.

The protein in the central section; belongs to the AAA ATPase family. In the C-terminal section; belongs to the peptidase M41 family. In terms of assembly, homohexamer. Zn(2+) is required as a cofactor.

It localises to the cell inner membrane. In terms of biological role, acts as a processive, ATP-dependent zinc metallopeptidase for both cytoplasmic and membrane proteins. Plays a role in the quality control of integral membrane proteins. This Pirellula staleyi (strain ATCC 27377 / DSM 6068 / ICPB 4128) (Pirella staleyi) protein is ATP-dependent zinc metalloprotease FtsH.